A 350-amino-acid chain; its full sequence is uncharacterized protein (350 aa).

Residues 164-327 (NDPLPGYVEV…EKTRIGARVV (164 aa)) form the Integrase catalytic domain.

This is an uncharacterized protein from Sinorhizobium fredii (strain NBRC 101917 / NGR234).